A 468-amino-acid polypeptide reads, in one-letter code: Protein wingless (468 aa).

The N-terminal stretch at 1-17 (MDISYIFVICLMALCSG) is a signal peptide. The interval 83-106 (VKGANLAISECQHQFRNRRWNCST) is binds porcupine. The cysteines at positions 93 and 104 are disulfide-linked. Residues asparagine 103 and asparagine 108 are each glycosylated (N-linked (GlcNAc...) asparagine). 4 disulfide bridges follow: cysteine 146–cysteine 154, cysteine 156–cysteine 185, cysteine 233–cysteine 247, and cysteine 235–cysteine 242. Residue serine 239 is the site of O-palmitoleoyl serine; by PORCN attachment. The tract at residues 333–362 (ISKIHHPNMPSPNSLPQAGQRGGRNGRRQG) is disordered. Intrachain disulfides connect cysteine 397–cysteine 428, cysteine 413–cysteine 423, cysteine 427–cysteine 467, cysteine 443–cysteine 458, cysteine 445–cysteine 455, and cysteine 450–cysteine 451. Asparagine 414 carries N-linked (GlcNAc...) asparagine glycosylation.

This sequence belongs to the Wnt family. As to quaternary structure, monomer; folds by intramolecular disulfide bonds. Interacts with porcupine (por). Interacts with wls; in the Golgi. Interacts with en. Interacts with the proteoglycan Cow (heparan sulfate-bound form); this stabilizes wg and promotes its extracellular distribution. Interacts with peg; the interaction facilitates short-range diffusion of wg. Palmitoleoylated by porcupine. The lipid group functions as a sorting signal, targeting the ligand to polarized vesicles that transport wg to unique sites at the cell surface. Depalmitoleoylated by notum, leading to inhibit Wnt signaling pathway. Post-translationally, major form is glycosylated at 2 sites, glycosylation is stimulated by porcupine at the ER. As to expression, segmented expression in embryos. In embryonic tracheal cells, expression is in stripes flanking the tracheal placode.

Its subcellular location is the secreted. The protein localises to the synapse. It is found in the membrane. It localises to the extracellular space. The protein resides in the extracellular matrix. Functionally, binds as a ligand to a family of frizzled seven-transmembrane receptors and acts through a cascade of genes on the nucleus. Segment polarity protein. May be a growth factor. Acts on neighboring cells to regulate at least one gene, the homeobox segmentation gene engrailed. Wg signal represses arm phosphorylation. Wg signaling operates by inactivating the sgg repression of engrailed autoactivation. Wg and Wnt2 have a role in the developing trachea and together are responsible for all dorsal trunk formation. Wg also acts in the developing epidermis. Acts as a morphogen, and diffuses long distances despite its lipidation. Lipophorin is required for diffusion, probably by acting as vehicle for its movement, explaining how it can spread over long distances despite its lipidation. In non-neuronal cells, wls directs wg secretion via clathrin-mediated endocytosis and the retromer complex (a conserved protein complex consisting of Vps26 and Vps35) to sustain a wls traffic loop encompassing the Golgi, the cell surface, an endocytic compartment and a retrograde route leading back to the Golgi. In neuronal cells (the larval motorneuron NMJ), wg signal moves across the synapse through the release of wls-containing exosome-like vesicles. The sequence is that of Protein wingless (wg) from Drosophila melanogaster (Fruit fly).